The following is a 124-amino-acid chain: Holo-[acyl-carrier-protein] synthase (124 aa).

Residues Asp7 and Glu55 each coordinate Mg(2+).

Belongs to the P-Pant transferase superfamily. AcpS family. Requires Mg(2+) as cofactor.

The protein localises to the cytoplasm. The catalysed reaction is apo-[ACP] + CoA = holo-[ACP] + adenosine 3',5'-bisphosphate + H(+). Transfers the 4'-phosphopantetheine moiety from coenzyme A to a Ser of acyl-carrier-protein. This Borreliella afzelii (strain PKo) (Borrelia afzelii) protein is Holo-[acyl-carrier-protein] synthase.